A 465-amino-acid polypeptide reads, in one-letter code: Lysophospholipid acyltransferase 2 (465 aa).

9 helical membrane passes run 15–35, 55–75, 86–106, 161–181, 214–234, 266–286, 356–376, 399–419, and 434–454; these read VSVA…ISFL, FLSY…PMTI, LSGF…HVFY, SLIE…GPVF, AVFQ…QFPL, YFIW…FSGW, AVWH…ALMI, VLVL…SVGF, and VYYI…LVPV. The active site involves His359.

It belongs to the membrane-bound acyltransferase family. In terms of assembly, interacts with GPAT9 and DGAT1. In terms of tissue distribution, expressed in rosette leaves, pollen grains, developing embryos and developing seeds.

It localises to the endoplasmic reticulum membrane. It catalyses the reaction a 1-acyl-sn-glycero-3-phosphocholine + an acyl-CoA = a 1,2-diacyl-sn-glycero-3-phosphocholine + CoA. The catalysed reaction is 1-(9Z-octadecenoyl)-sn-glycero-3-phosphocholine + (9Z)-octadecenoyl-CoA = 1,2-di-(9Z-octadecenoyl)-sn-glycero-3-phosphocholine + CoA. The enzyme catalyses 1-(9Z-octadecenoyl)-sn-glycero-3-phosphocholine + (9Z,12Z)-octadecadienoyl-CoA = 1-(9Z)-octadecenoyl-2-(9Z,12Z)-octadecadienoyl-sn-glycero-3-phosphocholine + CoA. It carries out the reaction (9Z,12Z,15Z)-octadecatrienoyl-CoA + 1-(9Z-octadecenoyl)-sn-glycero-3-phosphocholine = 1-(9Z-octadecaenoyl)-2-(9Z,12Z,15Z-octadecatrienoyl)-sn-glycero-3-phosphocholine + CoA. It catalyses the reaction a 1-acyl-sn-glycero-3-phosphoethanolamine + an acyl-CoA = a 1,2-diacyl-sn-glycero-3-phosphoethanolamine + CoA. The catalysed reaction is a 1-acyl-sn-glycero-3-phospho-L-serine + an acyl-CoA = a 1,2-diacyl-sn-glycero-3-phospho-L-serine + CoA. Its function is as follows. Lysophospholipid acyltransferase with broad specificity. Mediates the conversion of lysophosphatidylethanolamine (1-acyl-sn-glycero-3-phosphoethanolamine or LPE) into phosphatidylethanolamine (1,2-diacyl-sn-glycero-3-phosphoethanolamine or PE) (LPEAT activity). Catalyzes the acylation of lysophosphatidylserine (1-acyl-2-hydroxy-sn-glycero-3-phospho-L-serine or LPS) into phosphatidylserine (1,2-diacyl-sn-glycero-3-phospho-L-serine or PS) (LPSAT activity). Can convert lysophosphatidylcholine (1-acyl-sn-glycero-3-phosphocholine or LPC) into phosphatidylcholine (1,2-diacyl-sn-glycero-3-phosphocholine or PC) (LPCAT activity). Exhibits preference for C18-unsaturated acyl-CoA when transferring an acyl group to lysophosphatidylcholine. Can also utilize lysophosphatidylglycerol (LPG) as substrate in vitro. Has neither activity towards lysophosphatidic acid (LPA) nor lysophosphatidylinositol (LPI). Lysophospholipid acyltransferases catalyze the reacylation step of the phospholipid remodeling pathway also known as the Lands cycle. The primary function of the Lands cycle is to provide a route for acyl remodeling to modify fatty acid (FA) composition of phospholipids derived from the Kennedy pathway. Is involved in PC acyl editing and phosphocholine headgroup exchange between PC and diacylglycerols. This processes control the majority of acyl fluxes through PC to provide polyunsaturated fatty acids for triacylglycerols synthesis in seeds. Involved with LPCAT1 in the direct incorporation of newly synthesized fatty acids exported form the chloroplast into PC through acyl editing. The sequence is that of Lysophospholipid acyltransferase 2 from Arabidopsis thaliana (Mouse-ear cress).